We begin with the raw amino-acid sequence, 333 residues long: HTH-type transcriptional regulator pepR1 (333 aa).

In terms of domain architecture, HTH lacI-type spans 6 to 60 (VTIYDVAREAKVSMATVSRVVNGNNNVRKETRDRVMEVIKRLHYQPNAVAQGLAS). A DNA-binding region (H-T-H motif) is located at residues 8-27 (IYDVAREAKVSMATVSRVVN).

Functionally, transcriptional regulator of the pepQ gene for prolidase. This chain is HTH-type transcriptional regulator pepR1 (pepR1), found in Lactobacillus delbrueckii subsp. lactis.